Consider the following 467-residue polypeptide: Probable glycerol-3-phosphate dehydrogenase [NAD(+)] 2, cytosolic (467 aa).

NAD(+)-binding positions include 47–52, Lys195, and Ala234; that span reads GAGAWG. Substrate is bound at residue Lys195. The active-site Proton acceptor is the Lys284. Positions 346 and 374 each coordinate NAD(+). 346–347 lines the substrate pocket; sequence RN.

Belongs to the NAD-dependent glycerol-3-phosphate dehydrogenase family.

The protein localises to the cytoplasm. It localises to the cytosol. The enzyme catalyses sn-glycerol 3-phosphate + NAD(+) = dihydroxyacetone phosphate + NADH + H(+). May be involved in cell redox homeostasis. In Oryza sativa subsp. japonica (Rice), this protein is Probable glycerol-3-phosphate dehydrogenase [NAD(+)] 2, cytosolic.